Consider the following 365-residue polypeptide: Peptide chain release factor 2 (365 aa).

Gln-252 bears the N5-methylglutamine mark.

It belongs to the prokaryotic/mitochondrial release factor family. Methylated by PrmC. Methylation increases the termination efficiency of RF2.

It is found in the cytoplasm. In terms of biological role, peptide chain release factor 2 directs the termination of translation in response to the peptide chain termination codons UGA and UAA. The chain is Peptide chain release factor 2 from Pseudoalteromonas translucida (strain TAC 125).